Reading from the N-terminus, the 189-residue chain is UPF0200 protein Smar_1234 (189 aa).

10–17 (GMPGAGKS) contacts ATP.

This sequence belongs to the UPF0200 family.

The protein is UPF0200 protein Smar_1234 of Staphylothermus marinus (strain ATCC 43588 / DSM 3639 / JCM 9404 / F1).